The chain runs to 218 residues: Glutathione S-transferase Mu 7 (218 aa).

The GST N-terminal domain maps to 1–88; it reads MPMTLGYWDI…YLGRKHNLCG (88 aa). Residues 7–8, 46–50, 59–60, and 72–73 contribute to the glutathione site; these read YW, WLNEK, NL, and QS. One can recognise a GST C-terminal domain in the interval 90–208; sequence TEEERIRVDI…KTSRFLPRPM (119 aa). Tyr116 contacts substrate.

It belongs to the GST superfamily. Mu family. As to quaternary structure, homodimer.

It is found in the cytoplasm. It carries out the reaction RX + glutathione = an S-substituted glutathione + a halide anion + H(+). Conjugation of reduced glutathione to a wide number of exogenous and endogenous hydrophobic electrophiles. The sequence is that of Glutathione S-transferase Mu 7 (Gstm7) from Mus musculus (Mouse).